Here is a 441-residue protein sequence, read N- to C-terminus: Probable xylan O-acetyltransferase 10 (441 aa).

Residues 1–19 (MMKPQHGGMAGHGGGRTRS) lie on the Cytoplasmic side of the membrane. The helical; Signal-anchor for type II membrane protein transmembrane segment at 20–40 (PFLTSYALTLAFITFVSVLYF) threads the bilayer. At 41–441 (KDFSSTLHQP…ELLYSKLFFP (401 aa)) the chain is on the lumenal side. A disordered region spans residues 50 to 81 (PFLTRPPPHRRQIARPRAPSHHHGGGSSSGGG). Over residues 56-73 (PPHRRQIARPRAPSHHHG) the composition is skewed to basic residues. 4 cysteine pairs are disulfide-bonded: Cys-97-Cys-148, Cys-119-Cys-184, Cys-128-Cys-422, and Cys-341-Cys-418. Asn-154 is a glycosylation site (N-linked (GlcNAc...) asparagine). The GDS motif motif lies at 171 to 173 (GDS). Ser-173 (nucleophile) is an active-site residue. Asn-212, Asn-343, and Asn-381 each carry an N-linked (GlcNAc...) asparagine glycan. Asp-417 functions as the Proton donor in the catalytic mechanism. A DXXH motif motif is present at residues 417–420 (DCTH). His-420 serves as the catalytic Proton acceptor.

The protein belongs to the PC-esterase family. TBL subfamily. As to expression, expressed in roots, leaves and stems.

It is found in the golgi apparatus membrane. In terms of biological role, probable xylan acetyltransferase required for 2-O- and 3-O-monoacetylation of xylosyl residues in xylan. Possesses extremely low activity in vitro. The polypeptide is Probable xylan O-acetyltransferase 10 (Oryza sativa subsp. japonica (Rice)).